Consider the following 173-residue polypeptide: 3-hydroxydecanoyl-[acyl-carrier-protein] dehydratase (173 aa).

Residue His-71 is part of the active site.

This sequence belongs to the thioester dehydratase family. FabA subfamily. As to quaternary structure, homodimer.

It localises to the cytoplasm. It carries out the reaction a (3R)-hydroxyacyl-[ACP] = a (2E)-enoyl-[ACP] + H2O. The catalysed reaction is (3R)-hydroxydecanoyl-[ACP] = (2E)-decenoyl-[ACP] + H2O. The enzyme catalyses (2E)-decenoyl-[ACP] = (3Z)-decenoyl-[ACP]. The protein operates within lipid metabolism; fatty acid biosynthesis. Its function is as follows. Necessary for the introduction of cis unsaturation into fatty acids. Catalyzes the dehydration of (3R)-3-hydroxydecanoyl-ACP to E-(2)-decenoyl-ACP and then its isomerization to Z-(3)-decenoyl-ACP. Can catalyze the dehydratase reaction for beta-hydroxyacyl-ACPs with saturated chain lengths up to 16:0, being most active on intermediate chain length. The polypeptide is 3-hydroxydecanoyl-[acyl-carrier-protein] dehydratase (Bradyrhizobium diazoefficiens (strain JCM 10833 / BCRC 13528 / IAM 13628 / NBRC 14792 / USDA 110)).